The sequence spans 479 residues: MFS-type transporter lnaF (479 aa).

Helical transmembrane passes span 47–67, 71–91, 104–124, 136–156, 177–197, 208–228, 250–270, 283–303, 306–326, 344–364, and 372–392; these read WIYL…GFTP, GLII…SGAI, LLCI…GPLI, WCFY…VFLL, LVGL…LSWG, IIGL…VQWW, IFSF…PIWF, LMSI…AVLV, IGFY…GAGL, IPFG…VQAV, and LAIA…ISVA. Asn416 carries N-linked (GlcNAc...) asparagine glycosylation. A helical membrane pass occupies residues 442 to 462; the sequence is LAITQALYVGVALSSLAIVGA.

Belongs to the major facilitator superfamily. TCR/Tet family.

The protein localises to the cell membrane. MFS-type transporter; part of the lnb gene cluster that mediates the biosynthesis of diastereomeric piperazines. Lna and lnb clusters encode sets of enzymes that produce overlapping sets of previously undescribed metabolites such as piperazinomycin-like metabolites or morpholine. The lna and lnb biosynthetic pathways appear to be part of a signaling network that controls the formation of sclerotia, a resilient overwintering structure. May be involved in the secretion of the metabolites produced by the lna and lnb clusters. The chain is MFS-type transporter lnaF from Aspergillus flavus (strain ATCC 200026 / FGSC A1120 / IAM 13836 / NRRL 3357 / JCM 12722 / SRRC 167).